We begin with the raw amino-acid sequence, 96 residues long: Aspartyl/glutamyl-tRNA(Asn/Gln) amidotransferase subunit C (96 aa).

It belongs to the GatC family. As to quaternary structure, heterotrimer of A, B and C subunits.

The enzyme catalyses L-glutamyl-tRNA(Gln) + L-glutamine + ATP + H2O = L-glutaminyl-tRNA(Gln) + L-glutamate + ADP + phosphate + H(+). It carries out the reaction L-aspartyl-tRNA(Asn) + L-glutamine + ATP + H2O = L-asparaginyl-tRNA(Asn) + L-glutamate + ADP + phosphate + 2 H(+). In terms of biological role, allows the formation of correctly charged Asn-tRNA(Asn) or Gln-tRNA(Gln) through the transamidation of misacylated Asp-tRNA(Asn) or Glu-tRNA(Gln) in organisms which lack either or both of asparaginyl-tRNA or glutaminyl-tRNA synthetases. The reaction takes place in the presence of glutamine and ATP through an activated phospho-Asp-tRNA(Asn) or phospho-Glu-tRNA(Gln). The protein is Aspartyl/glutamyl-tRNA(Asn/Gln) amidotransferase subunit C of Neisseria gonorrhoeae (strain ATCC 700825 / FA 1090).